Reading from the N-terminus, the 352-residue chain is Protein Wnt-3a (352 aa).

The N-terminal stretch at 1-18 (MAPLGYLLVLCSLKQALG) is a signal peptide. Cystine bridges form between Cys-77–Cys-88, Cys-128–Cys-136, Cys-138–Cys-155, Cys-203–Cys-217, Cys-205–Cys-212, Cys-281–Cys-312, Cys-297–Cys-307, Cys-311–Cys-351, Cys-327–Cys-342, Cys-329–Cys-339, and Cys-334–Cys-335. N-linked (GlcNAc...) asparagine glycosylation is present at Asn-87. Ser-209 carries O-palmitoleoyl serine; by PORCN lipidation. Residue Asn-298 is glycosylated (N-linked (GlcNAc...) asparagine).

It belongs to the Wnt family. As to quaternary structure, forms a soluble 1:1 complex with AFM; this prevents oligomerization and is required for prolonged biological activity. The complex with AFM may represent the physiological form in body fluids. Homooligomer; disulfide-linked, leading to inactivation. Interacts with APCDD1 and WLS. Component of the Wnt-Fzd-LRP5-LRP6 signaling complex that contains a WNT protein, a FZD protein and LRP5 or LRP6. Interacts directly in the complex with LRP6. Interacts with PORCN. Interacts with glypican GPC3. Interacts with PKD1 (via extracellular domain). Interacts with FZD5. Post-translationally, proteolytic processing by TIKI1 and TIKI2 promotes oxidation and formation of large disulfide-bond oligomers, leading to inactivation of WNT3A. In terms of processing, disulfide bonds have critical and distinct roles in secretion and activity. Loss of each conserved cysteine in WNT3A results in high molecular weight oxidized Wnt oligomers, which are formed through inter-Wnt disulfide bonding. Palmitoleoylation by PORCN is required for efficient binding to frizzled receptors. Palmitoleoylation is required for proper trafficking to cell surface, vacuolar acidification is critical to release palmitoleoylated WNT3A from WLS in secretory vesicles. Depalmitoleoylated by NOTUM, leading to inhibit Wnt signaling pathway, possibly by promoting disulfide bond formation and oligomerization. In terms of tissue distribution, dorsal portion of the neural tube (developing roof plate), and mesenchyme tissue surrounding the umbilical veins.

It is found in the secreted. It localises to the extracellular space. The protein localises to the extracellular matrix. Its function is as follows. Ligand for members of the frizzled family of seven transmembrane receptors. Functions in the canonical Wnt signaling pathway that results in activation of transcription factors of the TCF/LEF family. Required for normal embryonic mesoderm development and formation of caudal somites. Required for normal morphogenesis of the developing neural tube. Mediates self-renewal of the stem cells at the bottom on intestinal crypts (in vitro). In Mus musculus (Mouse), this protein is Protein Wnt-3a (Wnt3a).